Consider the following 85-residue polypeptide: Colicin E3 immunity protein (85 aa).

Belongs to the cloacin immunity protein family. In terms of assembly, native colicin E3 is a 1:1 complex of A chain and protein B (Im3). Binds between the translocation and cytotoxic RNase domains of intact ColE3, blocking access to the 16S rRNA substrate. Forms a very tight 1:1 complex with the cytotoxic fragment (residues 456-551) of ColE3 (ceaC).

In terms of biological role, the cognate immunity protein for colicin E3 (ColE3), protects cells which harbor the plasmid ColE3 against the toxic action of ColE3. This protein inhibits the 16S RNA hydrolyzing activity of ColE3 by binding with very high affinity to the C-terminal catalytic domain of ColE3. The chain is Colicin E3 immunity protein from Escherichia coli.